The following is a 618-amino-acid chain: Probable Xaa-Pro aminopeptidase P (618 aa).

Mn(2+) contacts are provided by aspartate 415, aspartate 426, glutamate 524, and glutamate 538.

The protein belongs to the peptidase M24B family. It depends on Mn(2+) as a cofactor.

The enzyme catalyses Release of any N-terminal amino acid, including proline, that is linked to proline, even from a dipeptide or tripeptide.. Its function is as follows. Catalyzes the removal of a penultimate prolyl residue from the N-termini of peptides. This Pyricularia oryzae (strain 70-15 / ATCC MYA-4617 / FGSC 8958) (Rice blast fungus) protein is Probable Xaa-Pro aminopeptidase P (AMPP).